A 405-amino-acid polypeptide reads, in one-letter code: Polyadenylate-binding protein RBP45B (405 aa).

Positions 1-19 (MMQQPPPGGILPHHAPPPS) are enriched in pro residues. Positions 1 to 54 (MMQQPPPGGILPHHAPPPSAQQQYGYQQPYGIAGAAPPPPQMWNPQAAAPPSVQ) are disordered. Over residues 20–35 (AQQQYGYQQPYGIAGA) the composition is skewed to low complexity. RRM domains are found at residues 62-143 (RTLW…WASL), 155-234 (YTIF…PAAS), and 261-333 (TTVF…WGRS). Residues 379–405 (GGYQQTPQAGQQPPQQPPQQQQVGFSY) form a disordered region. Residues 380-405 (GYQQTPQAGQQPPQQPPQQQQVGFSY) are compositionally biased toward low complexity.

It belongs to the polyadenylate-binding RBP45 family. In terms of assembly, both isoform 1 and isoform 2 interact with poly(A)+ RNA in nucleus. Expressed in roots, leaves, stems, flowers, siliques, and seedlings. Present in immature anther tissues (tapetum cells) and mature pollen grains.

The protein resides in the nucleus. In terms of biological role, heterogeneous nuclear ribonucleoprotein (hnRNP)-protein binding the poly(A) tail of mRNA and probably involved in some steps of pre-mRNA maturation. The protein is Polyadenylate-binding protein RBP45B (RBP45B) of Arabidopsis thaliana (Mouse-ear cress).